The primary structure comprises 381 residues: Dof zinc finger protein 2 (381 aa).

The disordered stretch occupies residues 19–81 (MLMGANPNPN…ARPQKEKALN (63 aa)). Low complexity-rich tracts occupy residues 23–32 (ANPNPNGSSN) and 40–59 (SAAS…AAGA). Basic and acidic residues predominate over residues 68–79 (TERRARPQKEKA). A Dof-type zinc finger spans residues 80–134 (LNCPRCNSTNTKFCYYNNYSLQQPRYFCKTCRRYWTEGGSLRNVPVGGGSRKNKR). Positions 82, 85, 107, and 110 each coordinate Zn(2+). The tract at residues 329-349 (AGDANSGGDHQYDHGKNQGGG) is disordered.

It is found in the nucleus. Functionally, transcription factor that may transactivate seed storage protein genes in developing seeds. The polypeptide is Dof zinc finger protein 2 (Oryza sativa subsp. japonica (Rice)).